The following is a 253-amino-acid chain: UDP-Glc:alpha-D-GlcNAc-diphosphoundecaprenol beta-1,3-glucosyltransferase WfgD (253 aa).

It belongs to the glycosyltransferase 2 family. It depends on Mn(2+) as a cofactor. The cofactor is Mg(2+).

It is found in the cell inner membrane. The catalysed reaction is N-acetyl-alpha-D-glucosaminyl-di-trans,octa-cis-undecaprenyl diphosphate + UDP-alpha-D-glucose = beta-D-Glc-(1-&gt;3)-alpha-D-GlcNAc-di-trans,octa-cis-undecaprenyl diphosphate + UDP + H(+). Its pathway is bacterial outer membrane biogenesis; lipopolysaccharide biosynthesis. In terms of biological role, catalyzes the addition of Glc, the second sugar moiety of the O152-antigen repeating unit, to GlcNAc-pyrophosphate-undecaprenol. This is UDP-Glc:alpha-D-GlcNAc-diphosphoundecaprenol beta-1,3-glucosyltransferase WfgD (wfgD) from Escherichia coli.